The chain runs to 695 residues: Tripartite terminase subunit 1 (695 aa).

Residues 182–210 form a C3H1-type zinc finger; the sequence is CLECLQEVCLTPNQGTSLQAMLPDTACSH. 621–628 is a binding site for ATP; it reads YNRTWERE.

Belongs to the herpesviridae TRM1 protein family. In terms of assembly, associates with TRM2 and TRM3 to form the tripartite terminase complex. Interacts with portal protein.

The protein localises to the host nucleus. Its function is as follows. Component of the molecular motor that translocates viral genomic DNA in empty capsid during DNA packaging. Forms a tripartite terminase complex together with TRM2 and TRM3 in the host cytoplasm. Once the complex reaches the host nucleus, it interacts with the capsid portal vertex. This portal forms a ring in which genomic DNA is translocated into the capsid. TRM1 carries an endonuclease activity that plays an important role for the cleavage of concatemeric viral DNA into unit length genomes. The protein is Tripartite terminase subunit 1 of Homo sapiens (Human).